Consider the following 217-residue polypeptide: Large ribosomal subunit protein bL25 (217 aa).

The disordered stretch occupies residues 185 to 217; the sequence is TKETVEDEEAEEAAAEGAEETGETGETEEGGDE. A compositionally biased stretch (acidic residues) spans 189–217; sequence VEDEEAEEAAAEGAEETGETGETEEGGDE.

The protein belongs to the bacterial ribosomal protein bL25 family. CTC subfamily. In terms of assembly, part of the 50S ribosomal subunit; part of the 5S rRNA/L5/L18/L25 subcomplex. Contacts the 5S rRNA. Binds to the 5S rRNA independently of L5 and L18.

In terms of biological role, this is one of the proteins that binds to the 5S RNA in the ribosome where it forms part of the central protuberance. This is Large ribosomal subunit protein bL25 from Desulfosudis oleivorans (strain DSM 6200 / JCM 39069 / Hxd3) (Desulfococcus oleovorans).